The following is a 185-amino-acid chain: MICQECHERPATFHFTKVVNGEKIEVHICEQCAKENSDSYGISANQGFSIHNLLSGLLNMDSSFQNAGTQMFSHSEQISACPKCGMTFQQFRKIGRFGCSECYKTFHSNITPILRKVHSGNTVHAGKIPKRIGGNLHVRRQIDMLKKELESLIHQEEFENAAHVRDQIRLLEQSLKSTDSEEEQE.

Phosphoarginine is present on residues R115 and R169. The UVR domain maps to 139 to 174 (RRQIDMLKKELESLIHQEEFENAAHVRDQIRLLEQS).

In terms of assembly, interacts with McsB. In terms of processing, phosphorylated on Arg residues by McsB.

Functionally, activates the phosphorylation activity of the protein-arginine kinase McsB. Is required for the delocalization of competence proteins from the cell poles. In Bacillus subtilis (strain 168), this protein is Protein-arginine kinase activator protein (mcsA).